The sequence spans 486 residues: Cardiolipin synthase A (486 aa).

Transmembrane regions (helical) follow at residues 3–23 and 38–58; these read TFYTVVSWLVILGYWVLIAGV and MAWLLIIYILPMVGIIAYLSV. 2 PLD phosphodiesterase domains span residues 219-246 and 399-426; these read MDLRQHRKMVMIDNYIAYTGSMNMVDPR and EGGLLHTKSVLVDGELSLVGTVNLDMRS. Active-site residues include H224, K226, D231, H404, K406, and D411.

It belongs to the phospholipase D family. Cardiolipin synthase subfamily. ClsA sub-subfamily.

The protein resides in the cell inner membrane. The enzyme catalyses 2 a 1,2-diacyl-sn-glycero-3-phospho-(1'-sn-glycerol) = a cardiolipin + glycerol. Functionally, catalyzes the reversible phosphatidyl group transfer from one phosphatidylglycerol molecule to another to form cardiolipin (CL) (diphosphatidylglycerol) and glycerol. This is Cardiolipin synthase A from Salmonella gallinarum (strain 287/91 / NCTC 13346).